Reading from the N-terminus, the 429-residue chain is Serine hydroxymethyltransferase (429 aa).

(6S)-5,6,7,8-tetrahydrofolate-binding positions include Leu-126 and 130–132 (GHL). Position 235 is an N6-(pyridoxal phosphate)lysine (Lys-235). 359-361 (SPF) provides a ligand contact to (6S)-5,6,7,8-tetrahydrofolate.

It belongs to the SHMT family. As to quaternary structure, homodimer. The cofactor is pyridoxal 5'-phosphate.

Its subcellular location is the cytoplasm. The catalysed reaction is (6R)-5,10-methylene-5,6,7,8-tetrahydrofolate + glycine + H2O = (6S)-5,6,7,8-tetrahydrofolate + L-serine. It participates in one-carbon metabolism; tetrahydrofolate interconversion. The protein operates within amino-acid biosynthesis; glycine biosynthesis; glycine from L-serine: step 1/1. In terms of biological role, catalyzes the reversible interconversion of serine and glycine with tetrahydrofolate (THF) serving as the one-carbon carrier. This reaction serves as the major source of one-carbon groups required for the biosynthesis of purines, thymidylate, methionine, and other important biomolecules. Also exhibits THF-independent aldolase activity toward beta-hydroxyamino acids, producing glycine and aldehydes, via a retro-aldol mechanism. The polypeptide is Serine hydroxymethyltransferase (Synechococcus sp. (strain CC9311)).